Reading from the N-terminus, the 637-residue chain is Threonine--tRNA ligase (637 aa).

Residues 1–61 (MPNVKLPDGN…KEDCSLIIVT (61 aa)) enclose the TGS domain. The segment at 242 to 533 (DHRKLGKALD…LIEHYAGKLP (292 aa)) is catalytic. Zn(2+) is bound by residues Cys-333, His-384, and His-510.

This sequence belongs to the class-II aminoacyl-tRNA synthetase family. Homodimer. The cofactor is Zn(2+).

The protein localises to the cytoplasm. The catalysed reaction is tRNA(Thr) + L-threonine + ATP = L-threonyl-tRNA(Thr) + AMP + diphosphate + H(+). In terms of biological role, catalyzes the attachment of threonine to tRNA(Thr) in a two-step reaction: L-threonine is first activated by ATP to form Thr-AMP and then transferred to the acceptor end of tRNA(Thr). Also edits incorrectly charged L-seryl-tRNA(Thr). This is Threonine--tRNA ligase from Legionella pneumophila (strain Paris).